The sequence spans 650 residues: Chaperone protein DnaK (650 aa).

Thr-200 is subject to Phosphothreonine; by autocatalysis. The segment covering Ala-611–Ala-636 has biased composition (low complexity). The segment at Ala-611–Asp-650 is disordered.

This sequence belongs to the heat shock protein 70 family.

In terms of biological role, acts as a chaperone. The chain is Chaperone protein DnaK from Burkholderia mallei (strain NCTC 10247).